The chain runs to 717 residues: Cleavage stimulation factor subunit 3 (717 aa).

At S2 the chain carries N-acetylserine. 9 HAT repeats span residues 45 to 77 (QPID…AEIK), 79 to 110 (KNYD…YVRE), 117 to 152 (SYKE…FLKG), 163 to 196 (QRIT…YEEG), 221 to 261 (KEYE…WEKS), 271 to 303 (LITK…YLEQ), 319 to 352 (LFSD…YEES), 354 to 387 (MKYE…FARR), and 458 to 494 (NEDN…FESN). The segment at 683–704 (AVKRPNEDSDEDEEKGAVVPPV) is disordered. Position 691 is a phosphoserine (S691).

As to quaternary structure, homodimer. The CSTF complex is composed of CSTF1 (50 kDa subunit), CSTF2 (64 kDa subunit) and CSTF3 (77 kDa subunit). CSTF3 directly interacts with CSTF1 and CSTF2. Interacts with FIP1L1.

Its subcellular location is the nucleus. Functionally, one of the multiple factors required for polyadenylation and 3'-end cleavage of mammalian pre-mRNAs. The sequence is that of Cleavage stimulation factor subunit 3 (Cstf3) from Mus musculus (Mouse).